A 634-amino-acid polypeptide reads, in one-letter code: Factor of DNA methylation 5 (634 aa).

The stretch at 254–469 (IVVDDLANKI…EDTNSALMVK (216 aa)) forms a coiled coil.

In terms of biological role, acts in association with FDM3 and FDM4 for RNA-directed DNA methylation (RdDM). The protein is Factor of DNA methylation 5 of Arabidopsis thaliana (Mouse-ear cress).